We begin with the raw amino-acid sequence, 433 residues long: Glutamate-1-semialdehyde 2,1-aminomutase (433 aa).

Position 273 is an N6-(pyridoxal phosphate)lysine (K273).

The protein belongs to the class-III pyridoxal-phosphate-dependent aminotransferase family. HemL subfamily. As to quaternary structure, homodimer. Pyridoxal 5'-phosphate serves as cofactor.

It is found in the cytoplasm. The enzyme catalyses (S)-4-amino-5-oxopentanoate = 5-aminolevulinate. Its pathway is porphyrin-containing compound metabolism; protoporphyrin-IX biosynthesis; 5-aminolevulinate from L-glutamyl-tRNA(Glu): step 2/2. The protein operates within porphyrin-containing compound metabolism; chlorophyll biosynthesis. The protein is Glutamate-1-semialdehyde 2,1-aminomutase of Gloeothece citriformis (strain PCC 7424) (Cyanothece sp. (strain PCC 7424)).